The following is a 186-amino-acid chain: Putative 3-methyladenine DNA glycosylase (186 aa).

This sequence belongs to the DNA glycosylase MPG family.

The sequence is that of Putative 3-methyladenine DNA glycosylase from Borreliella burgdorferi (strain ATCC 35210 / DSM 4680 / CIP 102532 / B31) (Borrelia burgdorferi).